Consider the following 346-residue polypeptide: Acetylpolyamine amidohydrolase 1 (346 aa).

H161 functions as the Proton donor/acceptor in the catalytic mechanism. Zn(2+)-binding residues include D197, H199, and D286.

It belongs to the histone deacetylase family. Homodimer. The cofactor is Zn(2+).

It carries out the reaction N-acetylputrescine + H2O = putrescine + acetate. The catalysed reaction is N-acetylcadaverine + H2O = cadaverine + acetate. The enzyme catalyses N(1)-acetylspermine + H2O = spermine + acetate. It catalyses the reaction N(1)-acetylspermidine + H2O = spermidine + acetate. Its pathway is amine and polyamine metabolism. Functionally, catalyzes the deacetylation of acetylated polyamines such as N-acetylputrescine, N-acetylcadaverine, N(1)-acetylspermine and N(1)-acetylspermidine. Plays an important role in the metabolism of acetylated polyamines in P.aeruginosa. Is involved in the degradation pathways of N-acetylputrescine and N-acetylcadaverine, that allow P.aeruginosa to utilize these acetylpolyamines as a carbon source under glucose starvation. In vitro, can also hydrolyze artificial trifluoroacetylated and acetylated lysine-derivatives. The chain is Acetylpolyamine amidohydrolase 1 from Pseudomonas aeruginosa (strain ATCC 15692 / DSM 22644 / CIP 104116 / JCM 14847 / LMG 12228 / 1C / PRS 101 / PAO1).